A 396-amino-acid chain; its full sequence is Arginine biosynthesis bifunctional protein ArgJ (396 aa).

Substrate contacts are provided by Thr-150, Lys-177, Thr-188, Glu-267, Asn-391, and Thr-396. The active-site Nucleophile is the Thr-188.

Belongs to the ArgJ family. As to quaternary structure, heterotetramer of two alpha and two beta chains.

The protein localises to the cytoplasm. The catalysed reaction is N(2)-acetyl-L-ornithine + L-glutamate = N-acetyl-L-glutamate + L-ornithine. The enzyme catalyses L-glutamate + acetyl-CoA = N-acetyl-L-glutamate + CoA + H(+). It participates in amino-acid biosynthesis; L-arginine biosynthesis; L-ornithine and N-acetyl-L-glutamate from L-glutamate and N(2)-acetyl-L-ornithine (cyclic): step 1/1. Its pathway is amino-acid biosynthesis; L-arginine biosynthesis; N(2)-acetyl-L-ornithine from L-glutamate: step 1/4. Catalyzes two activities which are involved in the cyclic version of arginine biosynthesis: the synthesis of N-acetylglutamate from glutamate and acetyl-CoA as the acetyl donor, and of ornithine by transacetylation between N(2)-acetylornithine and glutamate. The protein is Arginine biosynthesis bifunctional protein ArgJ of Wolinella succinogenes (strain ATCC 29543 / DSM 1740 / CCUG 13145 / JCM 31913 / LMG 7466 / NCTC 11488 / FDC 602W) (Vibrio succinogenes).